Reading from the N-terminus, the 856-residue chain is Phospholipase D gamma 2 (856 aa).

The region spanning 21–161 (PLATSSGSLM…CSGNRIEGLF (141 aa)) is the C2 domain. Aspartate 223 contributes to the Ca(2+) binding site. Residues 362-397 (TIYTHHQKTMIVDAEAAQNRRKIVAFVGGLDLCNGR) form the PLD phosphodiesterase 1 domain. Residues histidine 367, lysine 369, and aspartate 374 contribute to the active site. Position 367 (histidine 367) interacts with a 1,2-diacyl-sn-glycero-3-phosphate. Ca(2+) contacts are provided by histidine 403 and histidine 435. Positions 562 and 707 each coordinate a 1,2-diacyl-sn-glycero-3-phosphate. Residues 702–729 (FMIYVHSKGMVVDDEFVLIGSANINQRS) form the PLD phosphodiesterase 2 domain. Residues histidine 707, lysine 709, and aspartate 714 contribute to the active site. Residue glutamate 770 coordinates Ca(2+).

It belongs to the phospholipase D family. C2-PLD subfamily. The cofactor is Ca(2+). Highly expressed in roots and flowers, moderately in stems, leaves and seedlings and low in siliques. Not detected in seeds.

The protein localises to the cytoplasm. It is found in the membrane. The catalysed reaction is a 1,2-diacyl-sn-glycero-3-phosphocholine + H2O = a 1,2-diacyl-sn-glycero-3-phosphate + choline + H(+). Inhibited by neomycin. Functionally, hydrolyzes glycerol-phospholipids at the terminal phosphodiesteric bond to generate phosphatidic acids (PA). Plays an important role in various cellular processes, including phytohormone action, vesicular trafficking, secretion, cytoskeletal arrangement, meiosis, tumor promotion, pathogenesis, membrane deterioration and senescence. Can use phosphatidylserine but prefers ethanolamine-containing lipids as substrates. Can use phosphatidylcholine (PC) as substrates in the presence of phosphatidylethanolamine (PE) and PIP2. Involved in membrane lipid modulation under aluminum (Al) stress and negatively modulate plant tolerance to Al. The sequence is that of Phospholipase D gamma 2 from Arabidopsis thaliana (Mouse-ear cress).